Consider the following 150-residue polypeptide: SsrA-binding protein (150 aa).

This sequence belongs to the SmpB family.

It is found in the cytoplasm. In terms of biological role, required for rescue of stalled ribosomes mediated by trans-translation. Binds to transfer-messenger RNA (tmRNA), required for stable association of tmRNA with ribosomes. tmRNA and SmpB together mimic tRNA shape, replacing the anticodon stem-loop with SmpB. tmRNA is encoded by the ssrA gene; the 2 termini fold to resemble tRNA(Ala) and it encodes a 'tag peptide', a short internal open reading frame. During trans-translation Ala-aminoacylated tmRNA acts like a tRNA, entering the A-site of stalled ribosomes, displacing the stalled mRNA. The ribosome then switches to translate the ORF on the tmRNA; the nascent peptide is terminated with the 'tag peptide' encoded by the tmRNA and targeted for degradation. The ribosome is freed to recommence translation, which seems to be the essential function of trans-translation. The sequence is that of SsrA-binding protein from Campylobacter jejuni subsp. jejuni serotype O:6 (strain 81116 / NCTC 11828).